Consider the following 174-residue polypeptide: Ribosome maturation factor RimM (174 aa).

One can recognise a PRC barrel domain in the interval A99–L172.

It belongs to the RimM family. In terms of assembly, binds ribosomal protein uS19.

It is found in the cytoplasm. In terms of biological role, an accessory protein needed during the final step in the assembly of 30S ribosomal subunit, possibly for assembly of the head region. Essential for efficient processing of 16S rRNA. May be needed both before and after RbfA during the maturation of 16S rRNA. It has affinity for free ribosomal 30S subunits but not for 70S ribosomes. This Chloroflexus aurantiacus (strain ATCC 29366 / DSM 635 / J-10-fl) protein is Ribosome maturation factor RimM.